A 1243-amino-acid chain; its full sequence is MLASPATETTVLMSQTEADLALRPPPPLGTAGQPRLGPPPRRARRFSGKAEPRPRSSRLSRRSSVDLGLLSSWSLPASPAPDPPDPPDSAGPGPARSPPPSSKEPPEGTWTEGAPVKAAEDSARPELPDSAVGPGSREPLRVPEAVALERRREQEEKEDMETQAVATSPDGRYLKFDIEIGRGSFKTVYRGLDTDTTVEVAWCELQTRKLSRAERQRFSEEVEMLKGLQHPNIVRFYDSWKSVLRGQVCIVLVTELMTSGTLKTYLRRFREMKPRVLQRWSRQILRGLHFLHSRVPPILHRDLKCDNVFITGPTGSVKIGDLGLATLKRASFAKSVIGTPEFMAPEMYEEKYDEAVDVYAFGMCMLEMATSEYPYSECQNAAQIYRKVTSGRKPNSFHKVKIPEVKEIIEGCIRTDKNERFTIQDLLAHAFFREERGVHVELAEEDDGEKPGLKLWLRMEDARRGGRPRDNQAIEFLFQLGRDAAEEVAQEMVALGLVCEADYQPVARAVRERVAAIQRKREKLRKARELEALPPEPGPPPATVPMAPGPPSVFPPEPEEPEADQHQPFLFRHASYSSTTSDCETDGYLSSSGFLDASDPALQPPGGVPSSLAESHLCLPSAFALSIPRSGPGSDFSPGDSYASDAASGLSDVGEGMGQMRRPPGRNLRRRPRSRLRVTSVSDQNDRVVECQLQTHNSKMVTFRFDLDGDSPEEIAAAMVYNEFILPSERDGFLRRIREIIQRVETLLKRDTGPMEAAEDTLSPQEEPAPLPALPVPLPDPSNEELQSSTSLEHRSWTAFSTSSSSPGTPLSPGNPFSPGTPISPGPIFPITSPPCHPSPSPFSPISSQVSSNPSPHPTSSPLPFSSSTPEFPVPLSQCPWSSLPTTSPPTFSPTCSQVTLSSPFFPPCPSTSSFPSTTAAPLLSLASAFSLAVMTVAQSLLSPSPGLLSQSPPAPPSPLPSLPLPPPVAPGGQESPSPHTAEVESEASPPPARPLPGEARLAPISEEGKPQLVGRFQVTSSKEPAEPLPLQPTSPTLSGSPKPSTPQLTSESSDTEDSAGGGPETREALAESDRAAEGLGAGVEEEGDDGKEPQVGGSPQPLSHPSPVWMNYSYSSLCLSSEESESSGEDEEFWAELQSLRQKHLSEVETLQTLQKKEIEDLYSRLGKQPPPGIVAPAAMLSSRQRRLSKGSFPTSRRNSLQRSEPPGPGIMRRNSLSGSSTGSQEQRASKGVTFAGDVGRM.

Polar residues predominate over residues 1 to 17 (MLASPATETTVLMSQTE). The tract at residues 1–142 (MLASPATETT…GPGSREPLRV (142 aa)) is disordered. The segment covering 65–77 (VDLGLLSSWSLPA) has biased composition (low complexity). Residues 78–103 (SPAPDPPDPPDSAGPGPARSPPPSSK) are compositionally biased toward pro residues. At Ser-97 the chain carries Phosphoserine. The span at 118 to 127 (AAEDSARPEL) shows a compositional bias: basic and acidic residues. Residues Lys-157 and Lys-175 each participate in a glycyl lysine isopeptide (Lys-Gly) (interchain with G-Cter in ubiquitin) cross-link. Positions 174 to 432 (LKFDIEIGRG…IQDLLAHAFF (259 aa)) constitute a Protein kinase domain. Residue Ser-184 coordinates ATP. Glycyl lysine isopeptide (Lys-Gly) (interchain with G-Cter in ubiquitin) cross-links involve residues Lys-186, Lys-226, and Lys-241. Residues 254 to 257 (TELM) and Lys-304 contribute to the ATP site. Residue Asp-321 is the Proton acceptor of the active site. A Glycyl lysine isopeptide (Lys-Gly) (interchain with G-Cter in ubiquitin) cross-link involves residue Lys-328. Phosphoserine; by autocatalysis is present on residues Ser-331 and Ser-335. Glycyl lysine isopeptide (Lys-Gly) (interchain with G-Cter in ubiquitin) cross-links involve residues Lys-387, Lys-393, Lys-450, and Lys-454. The tract at residues 526-564 (KARELEALPPEPGPPPATVPMAPGPPSVFPPEPEEPEAD) is disordered. Pro residues predominate over residues 534 to 556 (PPEPGPPPATVPMAPGPPSVFPP). The segment at 557-567 (EPEEPEADQHQ) is interaction with KLHL3. Residue Ser-575 is modified to Phosphoserine. Positions 630-641 (SGPGSDFSPGDS) are enriched in low complexity. Disordered regions lie at residues 630-683 (SGPG…SVSD), 751-871 (DTGP…STPE), and 943-1110 (SPSP…SPVW). Residues 663-676 (PPGRNLRRRPRSRL) show a composition bias toward basic residues. Residues 767–780 (EPAPLPALPVPLPD) are compositionally biased toward pro residues. The span at 797-812 (WTAFSTSSSSPGTPLS) shows a compositional bias: low complexity. Residues 822–843 (PISPGPIFPITSPPCHPSPSPF) are compositionally biased toward pro residues. 3 stretches are compositionally biased toward low complexity: residues 844–854 (SPISSQVSSNP), 862–871 (PLPFSSSTPE), and 943–952 (SPSPGLLSQS). The span at 953–970 (PPAPPSPLPSLPLPPPVA) shows a compositional bias: pro residues. Lys-1010 participates in a covalent cross-link: Glycyl lysine isopeptide (Lys-Gly) (interchain with G-Cter in ubiquitin). The RFXV motif signature appears at 1016–1019 (RFQV). Ser-1035 carries the phosphoserine modification. Over residues 1065 to 1077 (ETREALAESDRAA) the composition is skewed to basic and acidic residues. Glycyl lysine isopeptide (Lys-Gly) (interchain with G-Cter in ubiquitin) cross-links involve residues Lys-1144, Lys-1157, and Lys-1158. The segment at 1166–1243 (RLGKQPPPGI…VTFAGDVGRM (78 aa)) is disordered. 2 stretches are compositionally biased toward polar residues: residues 1193 to 1204 (SFPTSRRNSLQR) and 1216 to 1228 (NSLSGSSTGSQEQ). Ser-1217 is modified (phosphoserine).

This sequence belongs to the protein kinase superfamily. Ser/Thr protein kinase family. WNK subfamily. In terms of assembly, interacts with the C-terminal region of KCNJ1. Mg(2+) serves as cofactor. Post-translationally, autophosphorylated at Ser-331 and Ser-335, promoting its activation. Phosphorylated by WNK1 and WNK3. Phosphorylated at Ser-575 in a MAP3K15/ASK3-dependent process in response to osmotic stress or hypotonic low-chloride stimulation. Ubiquitinated by the BCR(KLHL3) complex, leading to its degradation. Also ubiquitinated by the BCR(KLHL2) complex. As to expression, expressed in kidney, colon and skin.

Its subcellular location is the cell junction. The protein resides in the tight junction. The catalysed reaction is L-seryl-[protein] + ATP = O-phospho-L-seryl-[protein] + ADP + H(+). It catalyses the reaction L-threonyl-[protein] + ATP = O-phospho-L-threonyl-[protein] + ADP + H(+). Its activity is regulated as follows. Activation requires autophosphorylation of Ser-331 and Ser-335. Autophosphorylation and subsequent activation is inhibited by increases in intracellular ionic strength: Cl(-) potently inhibits WNK4 kinase activity via direct binding. Also inhibited by K(+) ions. Serine/threonine-protein kinase component of the WNK4-SPAK/OSR1 kinase cascade, which acts as a key regulator of ion transport in the distal nephron and blood pressure. The WNK4-SPAK/OSR1 kinase cascade is composed of WNK4, which mediates phosphorylation and activation of downstream kinases OXSR1/OSR1 and STK39/SPAK. Following activation, OXSR1/OSR1 and STK39/SPAK catalyze phosphorylation of ion cotransporters, such as SLC12A1/NKCC2, SLC12A2/NKCC1, SLC12A3/NCC, SLC12A5/KCC2 or SLC12A6/KCC3, regulating their activity. Acts as a molecular switch that regulates the balance between renal salt reabsorption and K(+) secretion by modulating the activities of renal transporters and channels, including the Na-Cl cotransporter SLC12A3/NCC and the K(+) channel, KCNJ1/ROMK. Regulates NaCl reabsorption in the distal nephron by activating the thiazide-sensitive Na-Cl cotransporter SLC12A3/NCC in distal convoluted tubule cells of kidney: activates SLC12A3/NCC in a OXSR1/OSR1- and STK39/SPAK-dependent process. Also acts as a scaffold protein independently of its protein kinase activity: negatively regulates cell membrane localization of various transporters and channels (CFTR, KCNJ1/ROMK, SLC4A4, SLC26A9 and TRPV4) by clathrin-dependent endocytosis. Also inhibits the activity of the epithelial Na(+) channel (ENaC) SCNN1A, SCNN1B, SCNN1D in a inase-independent mechanism. May also phosphorylate NEDD4L. This chain is Serine/threonine-protein kinase WNK4, found in Homo sapiens (Human).